A 316-amino-acid chain; its full sequence is tRNA dimethylallyltransferase (316 aa).

17-24 (GPTASGKT) is a binding site for ATP. Position 19–24 (19–24 (TASGKT)) interacts with substrate. Interaction with substrate tRNA regions lie at residues 42 to 45 (DSAL), 166 to 170 (QRLSR), and 247 to 252 (RCVGYR).

It belongs to the IPP transferase family. In terms of assembly, monomer. Mg(2+) serves as cofactor.

The enzyme catalyses adenosine(37) in tRNA + dimethylallyl diphosphate = N(6)-dimethylallyladenosine(37) in tRNA + diphosphate. Catalyzes the transfer of a dimethylallyl group onto the adenine at position 37 in tRNAs that read codons beginning with uridine, leading to the formation of N6-(dimethylallyl)adenosine (i(6)A). The protein is tRNA dimethylallyltransferase of Salmonella paratyphi A (strain ATCC 9150 / SARB42).